The chain runs to 423 residues: Alpha-1-antichymotrypsin (423 aa).

The N-terminal stretch at 1 to 23 (MERMLPLLALGLLAAGFCPAVLC) is a signal peptide. N-linked (GlcNAc...) asparagine glycans are attached at residues asparagine 33, asparagine 93, asparagine 106, asparagine 127, and asparagine 186. Residues 235–237 (KKK) mediate DNA binding. Asparagine 271 carries an N-linked (GlcNAc...) asparagine glycan. The segment at 369 to 394 (GTEASAATAVKITLLSALVETRTIVR) is RCL. The tract at residues 381-389 (TLLSALVET) is O-glycosylated at one site.

It belongs to the serpin family. As to quaternary structure, interacts with DNAJC1. Post-translationally, N- and O-glycosylated. In terms of tissue distribution, plasma. Synthesized in the liver. Like the related alpha-1-antitrypsin, its concentration increases in the acute phase of inflammation or infection. Found in the amyloid plaques from the hippocampus of Alzheimer disease brains.

It localises to the secreted. In terms of biological role, although its physiological function is unclear, it can inhibit neutrophil cathepsin G and mast cell chymase, both of which can convert angiotensin-1 to the active angiotensin-2. This is Alpha-1-antichymotrypsin (SERPINA3) from Homo sapiens (Human).